The following is a 292-amino-acid chain: CCR4-NOT transcription complex subunit 8 (292 aa).

Asp40, Glu42, Asp161, and Asp230 together coordinate a divalent metal cation.

Belongs to the CAF1 family. Component of the CCR4-NOT complex; distinct complexes seem to exist that differ in the participation of probably mutually exclusive catalytic subunits; the complex contains two deadenylase subunits, CNOT6 or CNOT6L, and CNOT7 or CNOT8. In the complex interacts directly with CNOT1. Interacts with BTG1, BTG2 and TOB1. Interacts with BTG4.

It is found in the cytoplasm. The protein resides in the nucleus. The catalysed reaction is Exonucleolytic cleavage of poly(A) to 5'-AMP.. Functionally, has 3'-5' poly(A) exoribonuclease activity for synthetic poly(A) RNA substrate. Its function seems to be partially redundant with that of CNOT7. Catalytic component of the CCR4-NOT complex which is linked to various cellular processes including bulk mRNA degradation, miRNA-mediated repression, translational repression during translational initiation and general transcription regulation. During miRNA-mediated repression the complex also seems to act as translational repressor during translational initiation. Additional complex functions may be a consequence of its influence on mRNA expression. Associates with members of the BTG family such as TOB1 and BTG2 and is required for their anti-proliferative activity. In Homo sapiens (Human), this protein is CCR4-NOT transcription complex subunit 8 (CNOT8).